A 274-amino-acid polypeptide reads, in one-letter code: 2,3,4,5-tetrahydropyridine-2,6-dicarboxylate N-succinyltransferase (274 aa).

R104 and D141 together coordinate substrate.

It belongs to the transferase hexapeptide repeat family. In terms of assembly, homotrimer.

It localises to the cytoplasm. It carries out the reaction (S)-2,3,4,5-tetrahydrodipicolinate + succinyl-CoA + H2O = (S)-2-succinylamino-6-oxoheptanedioate + CoA. The protein operates within amino-acid biosynthesis; L-lysine biosynthesis via DAP pathway; LL-2,6-diaminopimelate from (S)-tetrahydrodipicolinate (succinylase route): step 1/3. The sequence is that of 2,3,4,5-tetrahydropyridine-2,6-dicarboxylate N-succinyltransferase from Escherichia coli O6:H1 (strain CFT073 / ATCC 700928 / UPEC).